Consider the following 198-residue polypeptide: MLRLLFGFLVTCFLLLPARAAEPQYAIFAGGCFWCVESDFDAVPGVLETISGYAGGKSANPTYEDYAKGGHREVVRVKFDPDRVSYAELVGVLFRTTDPTDGDGQFCDRGFAYTTAIHALNERQAMDAKAEKIKAEAELGRPIVTPVEGAAKFWPAEDYHQDFGKRNPIRYWYYRNGCGRNRTVEKLWGDRAYAGVSH.

Cysteine 32 is an active-site residue.

Belongs to the MsrA Met sulfoxide reductase family.

The enzyme catalyses L-methionyl-[protein] + [thioredoxin]-disulfide + H2O = L-methionyl-(S)-S-oxide-[protein] + [thioredoxin]-dithiol. It carries out the reaction [thioredoxin]-disulfide + L-methionine + H2O = L-methionine (S)-S-oxide + [thioredoxin]-dithiol. Its function is as follows. Has an important function as a repair enzyme for proteins that have been inactivated by oxidation. Catalyzes the reversible oxidation-reduction of methionine sulfoxide in proteins to methionine. In Rhizobium meliloti (strain 1021) (Ensifer meliloti), this protein is Peptide methionine sulfoxide reductase MsrA 2 (msrA2).